The sequence spans 138 residues: D-ribose pyranase (138 aa).

The active-site Proton donor is His-20. Substrate is bound by residues Asp-28, His-105, and 127–129; that span reads YAN.

This sequence belongs to the RbsD / FucU family. RbsD subfamily. As to quaternary structure, homodecamer.

It is found in the cytoplasm. It catalyses the reaction beta-D-ribopyranose = beta-D-ribofuranose. It participates in carbohydrate metabolism; D-ribose degradation; D-ribose 5-phosphate from beta-D-ribopyranose: step 1/2. Its function is as follows. Catalyzes the interconversion of beta-pyran and beta-furan forms of D-ribose. This chain is D-ribose pyranase, found in Psychromonas ingrahamii (strain DSM 17664 / CCUG 51855 / 37).